Consider the following 85-residue polypeptide: Conotoxin Lt28.7 (85 aa).

Positions methionine 1 to alanine 21 are cleaved as a signal peptide. The propeptide occupies valine 22–glutamate 40.

This sequence belongs to the conotoxin D superfamily. Contains 5 disulfide bonds. In terms of tissue distribution, expressed by the venom duct.

It localises to the secreted. Its function is as follows. Probable neurotoxin. This chain is Conotoxin Lt28.7, found in Conus litteratus (Lettered cone).